A 225-amino-acid polypeptide reads, in one-letter code: Protein-L-isoaspartate O-methyltransferase (225 aa).

S-adenosyl-L-homocysteine-binding positions include 57 to 60 (ATVS), His-65, Ser-89, 110 to 111 (EH), 142 to 143 (DG), Thr-216, and Gln-221. Ser-60 is a catalytic residue.

This sequence belongs to the methyltransferase superfamily. L-isoaspartyl/D-aspartyl protein methyltransferase family. As to quaternary structure, monomer.

It localises to the cytoplasm. The protein resides in the cytosol. It carries out the reaction [protein]-L-isoaspartate + S-adenosyl-L-methionine = [protein]-L-isoaspartate alpha-methyl ester + S-adenosyl-L-homocysteine. Its function is as follows. Initiates the repair of damaged proteins by catalyzing methyl esterification of L-isoaspartyl and D-aspartyl residues produced by spontaneous isomerization and racemization of L-aspartyl and L-asparaginyl residues in aging peptides and proteins. This Caenorhabditis elegans protein is Protein-L-isoaspartate O-methyltransferase (pcm-1).